A 500-amino-acid polypeptide reads, in one-letter code: L-arabinose isomerase (500 aa).

The Mn(2+) site is built by Glu-306, Glu-333, His-350, and His-450.

It belongs to the arabinose isomerase family. Homohexamer. Requires Mn(2+) as cofactor.

The catalysed reaction is beta-L-arabinopyranose = L-ribulose. The protein operates within carbohydrate degradation; L-arabinose degradation via L-ribulose; D-xylulose 5-phosphate from L-arabinose (bacterial route): step 1/3. Functionally, catalyzes the conversion of L-arabinose to L-ribulose. This chain is L-arabinose isomerase, found in Salmonella newport (strain SL254).